The sequence spans 836 residues: Probable ribonuclease ZC3H12B (836 aa).

Positions 1–92 (MTATAEVETP…SPCLDRPSFS (92 aa)) are disordered. Positions 8–28 (ETPKMEKSASKEEKQQPKQDS) are enriched in basic and acidic residues. Residues 35–46 (DSEEWMSSESDP) are compositionally biased toward acidic residues. Polar residues predominate over residues 50-60 (SLKSSDNSKSC). The span at 70–80 (KEMHSKPHRQL) shows a compositional bias: basic residues. An RNase NYN domain is found at 190–345 (LRPVVIDGSN…LGRHGPSLEN (156 aa)). Residues 355-380 (EHKKQPCPYGKKCTYGHKCKYYHPER) form a C3H1-type zinc finger.

It belongs to the ZC3H12 family. Mg(2+) is required as a cofactor.

Its function is as follows. May function as RNase and regulate the levels of target RNA species. In Homo sapiens (Human), this protein is Probable ribonuclease ZC3H12B (ZC3H12B).